A 1003-amino-acid chain; its full sequence is Putative helicase MOV-10 (1003 aa).

N6-acetyllysine is present on lysine 148. A phosphothreonine mark is found at threonine 160 and threonine 254. Serine 432 carries the post-translational modification Phosphoserine. 524-531 (GPPGTGKT) is an ATP binding site. Positions 645 to 648 (DEAG) match the DEAG box motif. The interval 921 to 965 (NPLLLGHDPDWKVFLEFCKENGGYTGCPFPAKLDLQQGQNLLQGL) is interaction with AGO2 and APOBEC3G. A disordered region spans residues 968–1003 (LSPSTSGLKSHDYLPQEREGEEGLSLQVEPEWRNEL). 2 positions are modified to phosphoserine: serine 969 and serine 977. Residues 976-985 (KSHDYLPQER) are compositionally biased toward basic and acidic residues.

This sequence belongs to the DNA2/NAM7 helicase family. SDE3 subfamily. As to quaternary structure, interacts with DICER1, AGO2, TARBP2, EIF6 and RPL7A (60S ribosome subunit); they form a large RNA-induced silencing complex (RISC). Interacts with APOBEC3G in an RNA-dependent manner. Interacts with TRIM71 (via NHL repeats) in an RNA-dependent manner. Interacts with both protein products of LIRE1, ORF1p and ORF2p. Interacts with TUT4 and, to a lesser extent, TUT7; the interactions are RNA-dependent. Interacts with AGO2, TNRC6B and UPF1; the interactions are direct and RNA-dependent. Interacts with FMR1; this interaction is direct, occurs in an RNA-dependent manner on polysomes and induces association of MOV10 with RNAs. Interacts with SHFL; the interaction increases in presence of RNA. Interacts with DHX34; the interaction is-RNA independent. Interacts with RBM46. Post-translationally, ubiquitinated by the DCX(DCAF12) complex that specifically recognizes the glutamate-leucine (Glu-Leu) degron at the C-terminus, leading to its degradation.

Its subcellular location is the cytoplasm. It localises to the P-body. It is found in the cytoplasmic ribonucleoprotein granule. The protein resides in the stress granule. The protein localises to the nucleus. It carries out the reaction ATP + H2O = ADP + phosphate + H(+). 5' to 3' RNA helicase that is involved in a number of cellular roles ranging from mRNA metabolism and translation, modulation of viral infectivity, inhibition of retrotransposition, or regulation of synaptic transmission. Plays an important role in innate antiviral immunity by promoting type I interferon production. Mechanistically, specifically uses IKKepsilon/IKBKE as the mediator kinase for IRF3 activation. Contributes to UPF1 mRNA target degradation by translocation along 3' UTRs. Required for microRNA (miRNA)-mediated gene silencing by the RNA-induced silencing complex (RISC). Required for both miRNA-mediated translational repression and miRNA-mediated cleavage of complementary mRNAs by RISC. In cooperation with FMR1, regulates miRNA-mediated translational repression by AGO2. Restricts retrotransposition of long interspersed element-1 (LINE-1) in cooperation with TUT4 and TUT7 counteracting the RNA chaperonne activity of L1RE1. Facilitates LINE-1 uridylation by TUT4 and TUT7. Required for embryonic viability and for normal central nervous system development and function. Plays two critical roles in early brain development: suppresses retroelements in the nucleus by directly inhibiting cDNA synthesis, while regulates cytoskeletal mRNAs to influence neurite outgrowth in the cytosol. May function as a messenger ribonucleoprotein (mRNP) clearance factor. In Bos taurus (Bovine), this protein is Putative helicase MOV-10 (MOV10).